The sequence spans 82 residues: MNRLMILVFAAVFLALASADEDVDIAKRGVPCLCVSDGPRPRGNNLSGIMWMKTGGYGGNGCPKGWHFCGKSRGFFSDCCKR.

An N-terminal signal peptide occupies residues 1-19 (MNRLMILVFAAVFLALASA). A propeptide spanning residues 20-26 (DEDVDIA) is cleaved from the precursor. 3 disulfide bridges follow: Cys32–Cys79, Cys34–Cys69, and Cys62–Cys80.

The protein belongs to the sea anemone sodium channel inhibitory toxin family. Type I subfamily.

It localises to the secreted. The protein localises to the nematocyst. In terms of biological role, binds specifically to voltage-gated sodium channels (Nav), thereby delaying their inactivation during signal transduction. Causes death to crabs. The sequence is that of Delta-actitoxin-Aeq2b 2 from Actinia equina (Beadlet anemone).